The following is a 139-amino-acid chain: ATP synthase epsilon chain (139 aa).

It belongs to the ATPase epsilon chain family. In terms of assembly, F-type ATPases have 2 components, CF(1) - the catalytic core - and CF(0) - the membrane proton channel. CF(1) has five subunits: alpha(3), beta(3), gamma(1), delta(1), epsilon(1). CF(0) has three main subunits: a, b and c.

The protein localises to the cell membrane. Functionally, produces ATP from ADP in the presence of a proton gradient across the membrane. The polypeptide is ATP synthase epsilon chain (Streptococcus pneumoniae serotype 2 (strain D39 / NCTC 7466)).